We begin with the raw amino-acid sequence, 520 residues long: Putative tyrosine carboxypeptidase MATCAP2 (520 aa).

Positions 116-153 (EEKKYHSQKQSSSTYSKRCRKPSKSPNTSRSKDPRRMK) are disordered. His331 is a binding site for Zn(2+). Glu332 (nucleophile) is an active-site residue. Positions 336 and 367 each coordinate Zn(2+).

Zn(2+) serves as cofactor.

Putative tyrosine carboxypeptidase. This chain is Putative tyrosine carboxypeptidase MATCAP2, found in Homo sapiens (Human).